Here is a 240-residue protein sequence, read N- to C-terminus: tRNA1(Val) (adenine(37)-N6)-methyltransferase (240 aa).

Belongs to the methyltransferase superfamily. tRNA (adenine-N(6)-)-methyltransferase family.

The protein localises to the cytoplasm. The enzyme catalyses adenosine(37) in tRNA1(Val) + S-adenosyl-L-methionine = N(6)-methyladenosine(37) in tRNA1(Val) + S-adenosyl-L-homocysteine + H(+). Functionally, specifically methylates the adenine in position 37 of tRNA(1)(Val) (anticodon cmo5UAC). This is tRNA1(Val) (adenine(37)-N6)-methyltransferase from Christiangramia forsetii (strain DSM 17595 / CGMCC 1.15422 / KT0803) (Gramella forsetii).